We begin with the raw amino-acid sequence, 553 residues long: uncharacterized protein (553 aa).

Residues 26-109 (RFEFVGWGSR…YDLLEKHYKE (84 aa)) form the SWIB/MDM2 domain. The Plus3 domain maps to 150-275 (AIVSDNIKLL…KAKKLHKDQT (126 aa)). Disordered stretches follow at residues 335-357 (QNPE…SESP) and 447-482 (PVNN…ETLD). Positions 343–353 (EAHKSDNEQRL) are enriched in basic and acidic residues. Polar residues predominate over residues 447–461 (PVNNVDNGSQVQPNP). Over residues 466 to 480 (ELSDDDEDDNGDGET) the composition is skewed to acidic residues. The region spanning 497–551 (KLNWLYKDPQGLVQGPFSLTQLKAWSDAEYFTKQFRVWMTGESMESAVLLTDVLR) is the GYF domain.

This is an uncharacterized protein from Arabidopsis thaliana (Mouse-ear cress).